We begin with the raw amino-acid sequence, 55 residues long: ATP synthase F(0) complex subunit 8 (55 aa).

A helical membrane pass occupies residues 4 to 24 (LLPTPWFTIFIYAWMVLLAVI).

The protein belongs to the ATPase protein 8 family. Component of the ATP synthase complex composed at least of ATP5F1A/subunit alpha, ATP5F1B/subunit beta, ATP5MC1/subunit c (homooctomer), MT-ATP6/subunit a, MT-ATP8/subunit 8, ATP5ME/subunit e, ATP5MF/subunit f, ATP5MG/subunit g, ATP5MK/subunit k, ATP5MJ/subunit j, ATP5F1C/subunit gamma, ATP5F1D/subunit delta, ATP5F1E/subunit epsilon, ATP5PF/subunit F6, ATP5PB/subunit b, ATP5PD/subunit d, ATP5PO/subunit OSCP. ATP synthase complex consists of a soluble F(1) head domain (subunits alpha(3) and beta(3)) - the catalytic core - and a membrane F(0) domain - the membrane proton channel (subunits c, a, 8, e, f, g, k and j). These two domains are linked by a central stalk (subunits gamma, delta, and epsilon) rotating inside the F1 region and a stationary peripheral stalk (subunits F6, b, d, and OSCP).

The protein resides in the mitochondrion membrane. Subunit 8, of the mitochondrial membrane ATP synthase complex (F(1)F(0) ATP synthase or Complex V) that produces ATP from ADP in the presence of a proton gradient across the membrane which is generated by electron transport complexes of the respiratory chain. ATP synthase complex consist of a soluble F(1) head domain - the catalytic core - and a membrane F(1) domain - the membrane proton channel. These two domains are linked by a central stalk rotating inside the F(1) region and a stationary peripheral stalk. During catalysis, ATP synthesis in the catalytic domain of F(1) is coupled via a rotary mechanism of the central stalk subunits to proton translocation. In vivo, can only synthesize ATP although its ATP hydrolase activity can be activated artificially in vitro. Part of the complex F(0) domain. This is ATP synthase F(0) complex subunit 8 from Dicentrarchus labrax (European seabass).